Consider the following 230-residue polypeptide: uncharacterized protein (230 aa).

A disordered region spans residues 1-57 (MPGPHSPNPGVGTNGPAPYPEPSSHEPQALDYPHDLGAAEPAFAPGPADDAALPPAA). Positions 38–55 (AAEPAFAPGPADDAALPP) are enriched in low complexity. The chain crosses the membrane as a helical span at residues 75–95 (LLIGIVVALALVSAMTAAIIY).

The protein localises to the membrane. This is an uncharacterized protein from Mycobacterium tuberculosis (strain CDC 1551 / Oshkosh).